A 395-amino-acid chain; its full sequence is Succinyl-diaminopimelate desuccinylase (395 aa).

His74 contacts Zn(2+). Asp76 is an active-site residue. Asp107 serves as a coordination point for Zn(2+). The active-site Proton acceptor is the Glu141. 3 residues coordinate Zn(2+): Glu142, Glu170, and His368.

The protein belongs to the peptidase M20A family. DapE subfamily. In terms of assembly, homodimer. The cofactor is Zn(2+). It depends on Co(2+) as a cofactor.

The catalysed reaction is N-succinyl-(2S,6S)-2,6-diaminopimelate + H2O = (2S,6S)-2,6-diaminopimelate + succinate. It participates in amino-acid biosynthesis; L-lysine biosynthesis via DAP pathway; LL-2,6-diaminopimelate from (S)-tetrahydrodipicolinate (succinylase route): step 3/3. Functionally, catalyzes the hydrolysis of N-succinyl-L,L-diaminopimelic acid (SDAP), forming succinate and LL-2,6-diaminopimelate (DAP), an intermediate involved in the bacterial biosynthesis of lysine and meso-diaminopimelic acid, an essential component of bacterial cell walls. The polypeptide is Succinyl-diaminopimelate desuccinylase (Brucella abortus (strain S19)).